Reading from the N-terminus, the 269-residue chain is Surfeit locus protein 4 (269 aa).

Helical transmembrane passes span 64-84 (LLASSFVFLNLLGQLTGCILV), 92-112 (YACFGLFGIIALQTIAYSILW), 179-199 (FFSILQNIVGTALMILVAIGF), 203-223 (LAALTLVVWLFAINVYFNAFW), and 239-259 (FFQTMSVIGGLLLVVALGPGG). The Di-lysine motif signature appears at 266–269 (KKEW).

It belongs to the SURF4 family. In terms of assembly, found in a complex composed at least of SURF4, TMED2 and TMED10. May interact with LMAN1. Interacts with ZFYVE27 and with KIF5A in a ZFYVE27-dependent manner. Interacts with STING1. Interacts with SAR1B. Interacts with TMEM41B.

It localises to the endoplasmic reticulum membrane. The protein resides in the endoplasmic reticulum-Golgi intermediate compartment membrane. Its subcellular location is the golgi apparatus membrane. Its function is as follows. Endoplasmic reticulum cargo receptor that mediates the export of lipoproteins by recruiting cargos into COPII vesicles to facilitate their secretion. Acts as a cargo receptor for lipoproteins bearing both APOB and APOA1, thereby regulating lipoprotein delivery and the maintenance of lipid homeostasis. Synergizes with the GTPase SAR1B to mediate transport of circulating lipoproteins. Promotes the secretion of PCSK9. Also mediates the efficient secretion of erythropoietin (EPO). May also play a role in the maintenance of the architecture of the endoplasmic reticulum-Golgi intermediate compartment and of the Golgi. The polypeptide is Surfeit locus protein 4 (Bos taurus (Bovine)).